The primary structure comprises 406 residues: COP9 signalosome complex subunit 4 (406 aa).

N-acetylalanine is present on alanine 2. Lysine 25 is subject to N6-acetyllysine. The PCI domain maps to 197–366; it reads YRRKFIEAAQ…GIVHFETREA (170 aa).

The protein belongs to the CSN4 family. Component of the CSN complex, composed of COPS1/GPS1, COPS2, COPS3, COPS4, COPS5, COPS6, COPS7 (COPS7A or COPS7B), COPS8 and COPS9. In the complex, it probably interacts directly with COPS1, COPS2, COPS3, COPS5, COPS6, COPS7 (COPS7A or COPS7B) and COPS8. Interacts with TOR1A; the interaction is direct and associates TOR1A and SNAPIN with the CSN complex. Interacts with STON2; controls STON2 neddylation levels. Interacts with ERCC6.

Its subcellular location is the cytoplasm. It localises to the nucleus. The protein resides in the cytoplasmic vesicle. The protein localises to the secretory vesicle. It is found in the synaptic vesicle. Component of the COP9 signalosome complex (CSN), a complex involved in various cellular and developmental processes. The CSN complex is an essential regulator of the ubiquitin (Ubl) conjugation pathway by mediating the deneddylation of the cullin subunits of SCF-type E3 ligase complexes, leading to decrease the Ubl ligase activity of SCF-type complexes such as SCF, CSA or DDB2. Also involved in the deneddylation of non-cullin subunits such as STON2. The complex is also involved in phosphorylation of p53/TP53, c-jun/JUN, IkappaBalpha/NFKBIA, ITPK1, IRF8/ICSBP and SNAPIN, possibly via its association with CK2 and PKD kinases. CSN-dependent phosphorylation of TP53 and JUN promotes and protects degradation by the Ubl system, respectively. This chain is COP9 signalosome complex subunit 4 (COPS4), found in Bos taurus (Bovine).